The chain runs to 189 residues: Glucose-6-phosphate isomerase (189 aa).

Positions 88, 90, 97, and 136 each coordinate Fe cation.

The protein belongs to the archaeal-type GPI family. In terms of assembly, homodimer.

It is found in the cytoplasm. The catalysed reaction is alpha-D-glucose 6-phosphate = beta-D-fructose 6-phosphate. Its pathway is carbohydrate degradation; glycolysis; D-glyceraldehyde 3-phosphate and glycerone phosphate from D-glucose: step 2/4. This Thermococcus kodakarensis (strain ATCC BAA-918 / JCM 12380 / KOD1) (Pyrococcus kodakaraensis (strain KOD1)) protein is Glucose-6-phosphate isomerase.